Consider the following 459-residue polypeptide: Siroheme synthase (459 aa).

Positions 1–204 are precorrin-2 dehydrogenase /sirohydrochlorin ferrochelatase; sequence MDHLPIFCQL…ADEKAVNATT (204 aa). NAD(+) contacts are provided by residues 22 to 23 and 43 to 44; these read DV and LT. Ser128 carries the phosphoserine modification. The tract at residues 216-459 is uroporphyrinogen-III C-methyltransferase; that stretch reads GEVVLVGAGP…KLNWFSNYYD (244 aa). Pro225 is an S-adenosyl-L-methionine binding site. The Proton acceptor role is filled by Asp248. The active-site Proton donor is Lys270. Residues 301–303, Ile306, 331–332, Met382, and Gly411 each bind S-adenosyl-L-methionine; these read GGD and TA.

This sequence in the N-terminal section; belongs to the precorrin-2 dehydrogenase / sirohydrochlorin ferrochelatase family. In the C-terminal section; belongs to the precorrin methyltransferase family.

The enzyme catalyses uroporphyrinogen III + 2 S-adenosyl-L-methionine = precorrin-2 + 2 S-adenosyl-L-homocysteine + H(+). The catalysed reaction is precorrin-2 + NAD(+) = sirohydrochlorin + NADH + 2 H(+). It catalyses the reaction siroheme + 2 H(+) = sirohydrochlorin + Fe(2+). It participates in cofactor biosynthesis; adenosylcobalamin biosynthesis; precorrin-2 from uroporphyrinogen III: step 1/1. Its pathway is cofactor biosynthesis; adenosylcobalamin biosynthesis; sirohydrochlorin from precorrin-2: step 1/1. It functions in the pathway porphyrin-containing compound metabolism; siroheme biosynthesis; precorrin-2 from uroporphyrinogen III: step 1/1. The protein operates within porphyrin-containing compound metabolism; siroheme biosynthesis; siroheme from sirohydrochlorin: step 1/1. It participates in porphyrin-containing compound metabolism; siroheme biosynthesis; sirohydrochlorin from precorrin-2: step 1/1. Functionally, multifunctional enzyme that catalyzes the SAM-dependent methylations of uroporphyrinogen III at position C-2 and C-7 to form precorrin-2 via precorrin-1. Then it catalyzes the NAD-dependent ring dehydrogenation of precorrin-2 to yield sirohydrochlorin. Finally, it catalyzes the ferrochelation of sirohydrochlorin to yield siroheme. The protein is Siroheme synthase of Salmonella agona (strain SL483).